The sequence spans 109 residues: Non-structural protein of 12.7 kDa (109 aa).

The protein belongs to the coronaviruses ns12.7 protein family.

This chain is Non-structural protein of 12.7 kDa, found in Sus scrofa (Pig).